The sequence spans 321 residues: Probable transaldolase (321 aa).

The active-site Schiff-base intermediate with substrate is Lys133.

It belongs to the transaldolase family. Type 1 subfamily. Homodimer.

The protein localises to the cytoplasm. The catalysed reaction is D-sedoheptulose 7-phosphate + D-glyceraldehyde 3-phosphate = D-erythrose 4-phosphate + beta-D-fructose 6-phosphate. The protein operates within carbohydrate degradation; pentose phosphate pathway; D-glyceraldehyde 3-phosphate and beta-D-fructose 6-phosphate from D-ribose 5-phosphate and D-xylulose 5-phosphate (non-oxidative stage): step 2/3. Transaldolase is important for the balance of metabolites in the pentose-phosphate pathway. This chain is Probable transaldolase (tal), found in Dictyostelium discoideum (Social amoeba).